We begin with the raw amino-acid sequence, 380 residues long: 3-isopropylmalate dehydratase large subunit 2 (380 aa).

[4Fe-4S] cluster contacts are provided by C262, C320, and C323.

Belongs to the aconitase/IPM isomerase family. LeuC type 2 subfamily. As to quaternary structure, heterodimer of LeuC and LeuD. The cofactor is [4Fe-4S] cluster.

The catalysed reaction is (2R,3S)-3-isopropylmalate = (2S)-2-isopropylmalate. It functions in the pathway amino-acid biosynthesis; L-leucine biosynthesis; L-leucine from 3-methyl-2-oxobutanoate: step 2/4. Its function is as follows. Catalyzes the isomerization between 2-isopropylmalate and 3-isopropylmalate, via the formation of 2-isopropylmaleate. The polypeptide is 3-isopropylmalate dehydratase large subunit 2 (Pyrococcus furiosus (strain ATCC 43587 / DSM 3638 / JCM 8422 / Vc1)).